We begin with the raw amino-acid sequence, 321 residues long: tRNA(Ile)-lysidine synthase (321 aa).

21–26 contacts ATP; the sequence is SYGSDS.

It belongs to the tRNA(Ile)-lysidine synthase family.

It localises to the cytoplasm. The enzyme catalyses cytidine(34) in tRNA(Ile2) + L-lysine + ATP = lysidine(34) in tRNA(Ile2) + AMP + diphosphate + H(+). Its function is as follows. Ligates lysine onto the cytidine present at position 34 of the AUA codon-specific tRNA(Ile) that contains the anticodon CAU, in an ATP-dependent manner. Cytidine is converted to lysidine, thus changing the amino acid specificity of the tRNA from methionine to isoleucine. The polypeptide is tRNA(Ile)-lysidine synthase (Campylobacter jejuni (strain RM1221)).